Here is a 132-residue protein sequence, read N- to C-terminus: U-scoloptoxin(05)-Er3a (132 aa).

The signal sequence occupies residues 1-19 (MRSWFVFVALLAVVFLPSS).

This sequence belongs to the scoloptoxin-05 family. In terms of processing, contains 5 disulfide bonds. In terms of tissue distribution, expressed by the venom gland.

Its subcellular location is the secreted. This chain is U-scoloptoxin(05)-Er3a, found in Ethmostigmus rubripes (Giant centipede).